Reading from the N-terminus, the 524-residue chain is mRNA cap guanine-N(7) methyltransferase (524 aa).

The disordered stretch occupies residues 1-155 (MSDKEAGVAS…DKKRAHDEAE (155 aa)). Positions 19–40 (NKDEVDVKNTEEHSKQESKSDI) are enriched in basic and acidic residues. Polar residues predominate over residues 68–77 (NNKVISSVYN). Basic and acidic residues predominate over residues 90-99 (KTTDKYDKYG). Positions 100–112 (SRSTPIATPTAPV) are enriched in polar residues. The 309-residue stretch at 214 to 522 (SPIYKLRNFN…FYIGFVFEKL (309 aa)) folds into the mRNA cap 0 methyltransferase domain. 223–224 (NN) is an mRNA binding site. S-adenosyl-L-methionine contacts are provided by Lys-227, Cys-251, Asp-273, Asp-319, Gln-349, and Tyr-354.

Belongs to the class I-like SAM-binding methyltransferase superfamily. mRNA cap 0 methyltransferase family.

It localises to the nucleus. The catalysed reaction is a 5'-end (5'-triphosphoguanosine)-ribonucleoside in mRNA + S-adenosyl-L-methionine = a 5'-end (N(7)-methyl 5'-triphosphoguanosine)-ribonucleoside in mRNA + S-adenosyl-L-homocysteine. Its function is as follows. Responsible for methylating the 5'-cap structure of mRNAs. This Debaryomyces hansenii (strain ATCC 36239 / CBS 767 / BCRC 21394 / JCM 1990 / NBRC 0083 / IGC 2968) (Yeast) protein is mRNA cap guanine-N(7) methyltransferase (ABD1).